A 177-amino-acid chain; its full sequence is Iron-sulfur cluster assembly protein SufA (177 aa).

The N-terminal stretch at 1–18 (MTIHIFLCFLLILKIVNA) is a signal peptide. Cys101, Cys169, and Cys171 together coordinate [4Fe-4S] cluster.

The protein belongs to the HesB/IscA family. In terms of assembly, homodimer. Homotetramer formation is observed in vitro.

The protein localises to the plastid. It localises to the apicoplast. It participates in cofactor biosynthesis; iron-sulfur cluster biosynthesis. Functionally, participates in the sulfur mobilization (SUF) pathway for iron-sulfur (Fe-S) cluster biogenesis. Involved in the pre-assembly of [4Fe-4S] clusters and their transfer to target proteins. The chain is Iron-sulfur cluster assembly protein SufA from Plasmodium falciparum (isolate 3D7).